A 455-amino-acid chain; its full sequence is Argininosuccinate lyase (455 aa).

Belongs to the lyase 1 family. Argininosuccinate lyase subfamily.

The protein localises to the cytoplasm. It carries out the reaction 2-(N(omega)-L-arginino)succinate = fumarate + L-arginine. It participates in amino-acid biosynthesis; L-arginine biosynthesis; L-arginine from L-ornithine and carbamoyl phosphate: step 3/3. The protein is Argininosuccinate lyase of Roseiflexus sp. (strain RS-1).